We begin with the raw amino-acid sequence, 436 residues long: Methylenetetrahydrofolate--tRNA-(uracil-5-)-methyltransferase TrmFO (436 aa).

FAD is bound at residue 9-14; the sequence is GAGLAG.

This sequence belongs to the MnmG family. TrmFO subfamily. The cofactor is FAD.

It localises to the cytoplasm. The catalysed reaction is uridine(54) in tRNA + (6R)-5,10-methylene-5,6,7,8-tetrahydrofolate + NADH + H(+) = 5-methyluridine(54) in tRNA + (6S)-5,6,7,8-tetrahydrofolate + NAD(+). It carries out the reaction uridine(54) in tRNA + (6R)-5,10-methylene-5,6,7,8-tetrahydrofolate + NADPH + H(+) = 5-methyluridine(54) in tRNA + (6S)-5,6,7,8-tetrahydrofolate + NADP(+). Functionally, catalyzes the folate-dependent formation of 5-methyl-uridine at position 54 (M-5-U54) in all tRNAs. In Acetivibrio thermocellus (strain ATCC 27405 / DSM 1237 / JCM 9322 / NBRC 103400 / NCIMB 10682 / NRRL B-4536 / VPI 7372) (Clostridium thermocellum), this protein is Methylenetetrahydrofolate--tRNA-(uracil-5-)-methyltransferase TrmFO.